A 125-amino-acid polypeptide reads, in one-letter code: Large ribosomal subunit protein bL12 (125 aa).

This sequence belongs to the bacterial ribosomal protein bL12 family. Homodimer. Part of the ribosomal stalk of the 50S ribosomal subunit. Forms a multimeric L10(L12)X complex, where L10 forms an elongated spine to which 2 to 4 L12 dimers bind in a sequential fashion. Binds GTP-bound translation factors.

Functionally, forms part of the ribosomal stalk which helps the ribosome interact with GTP-bound translation factors. Is thus essential for accurate translation. This chain is Large ribosomal subunit protein bL12, found in Chelativorans sp. (strain BNC1).